The following is a 343-amino-acid chain: Interferon-inducible protein AIM2 (343 aa).

The region spanning 1 to 87 is the Pyrin domain; it reads MESKYKEILL…AKRLQEEKEK (87 aa). One can recognise an HIN-200 domain in the interval 138–337; sequence MVAQQESIRE…SGVHSTIKVI (200 aa).

This sequence belongs to the HIN-200 family. As to quaternary structure, self-associates; forms homooligomers in response to cytosolic double-stranded DNA (dsDNA) and the dsDNA seems to serve as oligomerization platform. Component of AIM2 inflammasome, which consists of a signal sensor component (AIM2), an adapter (PYCARD/ASC), which recruits an effector pro-inflammatory caspase (CASP1). Interacts (via pyrin domain) with PYCARD/ASC (via pyrin domain); interaction is direct. Component of the AIM2 PANoptosome complex, a multiprotein complex that drives inflammatory cell death (PANoptosis). Interacts with PYDC5; disrupts assembly of the AIM2 inflammasome complex. Interacts with EIF2AK2/PKR. Interacts with MAPRE1. Interacts with IFI16. Interacts with isoform IFI16-beta of IFI16; preventing the interaction between AIM2 and PYCARD/ASC. Interacts with RACK1; promoting association with PP2A phosphatase and dephosphorylation of AKT1. Interacts with TRIM11; promoting AIM2 recruitment to autophagosomes and autophagy-dependent degradation. (Microbial infection) Interacts with human herpesvirus 8 protein SOX/ORF37; this interaction inhibits AIM2 polymerization and subsequent inflammasome activation. Degraded via selective autophagy following interaction with TRIM11. Expressed in spleen, small intestine, peripheral blood leukocytes, and testis.

It localises to the cytoplasm. Its subcellular location is the inflammasome. It is found in the nucleus. With respect to regulation, inactive in absence of double-stranded DNA (dsDNA). Homooligomerizes upon binding to dsDNA, dsDNA serving as an oligomerization platform. AIM2 requires large dsDNA to generate a structural template that couples dsDNA ligand-binding and homooligomerization. Homooligomerization is followed by recruitment of PYCARD/ASC to initiate speck formation (nucleation). AIM2 and PYCARD/ASC homooligomer filaments assemble bidirectionally and the recognition between AIM2 and PYCARD/ASC oligomers occurs in a head-to-tail manner. Clustered PYCARD/ASC nucleates the formation of CASP1 filaments through the interaction of their respective CARD domains, acting as a platform for CASP1 polymerization and activation. Active CASP1 then specifically processes protein precursors, such as gasdermin-D (GSDMD), IL1B and IL18, leading to the release of mature cytokines in the extracellular milieu or pyroptosis, depending on cell type. AIM2 can be activated in response to events that cause genomic DNA (HIV protease inhibitor nelfinavir) or mitochondrial DNA release in the cytoplasm (such as Perfluoroalkyl substance pollutants or cholesterol overload). Activation of the AIM2 inflammasome is inhibited by isoform IFI16-beta of IFI16, which prevents the interaction between AIM2 and PYCARD/ASC. Activation of the AIM2 inflammasome is inhibited by TRIM11, which promotes autophagy-dependent degradation of AIM2. Functionally, sensor component of the AIM2 inflammasome, which mediates inflammasome activation in response to the presence of double-stranded DNA (dsDNA) in the cytosol, leading to subsequent pyroptosis. Inflammasomes are supramolecular complexes that assemble in the cytosol in response to pathogens and other damage-associated signals and play critical roles in innate immunity and inflammation. Acts as a recognition receptor (PRR): specifically recognizes and binds dsDNA in the cytosol, and mediates the formation of the inflammasome polymeric complex composed of AIM2, CASP1 and PYCARD/ASC. Recruitment of pro-caspase-1 (proCASP1) to the AIM2 inflammasome promotes caspase-1 (CASP1) activation, which subsequently cleaves and activates inflammatory cytokines IL1B and IL18 and gasdermin-D (GSDMD), promoting cytokine secretion. In some cells, CASP1 activation mediates cleavage and activation of GSDMD, triggering pyroptosis without promoting cytokine secretion. Detects cytosolic dsDNA of viral and bacterial origin in a non-sequence-specific manner. Involved in the DNA damage response caused by acute ionizing radiation by mediating pyroptosis of intestinal epithelial cells and bone marrow cells in response to double-strand DNA breaks. Mechanistically, AIM2 senses DNA damage in the nucleus to mediate inflammasome assembly and inflammatory cell death. Also acts as a regulator of neurodevelopment via its role in the DNA damage response: acts by promoting neural cell death in response to DNA damage in the developing brain, thereby purging genetically compromised cells of the central nervous system. Pyroptosis mediated by the AIM2 inflammasome in response to DNA damage is dependent on GSDMD without involving IL1B and IL18 cytokine secretion. Also acts as a mediator of pyroptosis, necroptosis and apoptosis (PANoptosis), an integral part of host defense against pathogens, in response to bacterial infection. Can also trigger PYCARD/ASC-dependent, caspase-1-independent cell death that involves caspase-8 (CASP8). Its function is as follows. Also acts as a tumor suppressor independently of its role in inflammatory response. Able to suppress overt cell proliferation in enterocytes: restricts stem cell proliferation in the intestinal mucosa in an inflammasome-independent manner, contributing to a decrease in the likelihood of colorectal cancer development. AIM2 suppresses cell proliferation by inhibiting phosphorylation of AKT1 at 'Ser-473', preventing AKT1 activation and AKT-mTOR signaling pathway. Inhibits AKT1 phosphorylation both by inhibiting the activity of PRKDC/DNA-PK kinase and promoting dephosphorylation by PP2A phosphatase. Also acts as a key regulator of regulatory T-cells (Treg) homeostasis by promoting their stability: acts by preventing AKT1 activation. Its role in Treg homeostasis is important to restain autoimmune diseases. In Homo sapiens (Human), this protein is Interferon-inducible protein AIM2.